The primary structure comprises 86 residues: uncharacterized protein (86 aa).

Helical transmembrane passes span 21–43 (VFWV…EATA) and 53–75 (FWYA…YFYF).

It is found in the cell membrane. This is an uncharacterized protein from Archaeoglobus fulgidus (strain ATCC 49558 / DSM 4304 / JCM 9628 / NBRC 100126 / VC-16).